The sequence spans 353 residues: Protein-glutamate methylesterase/protein-glutamine glutaminase 4 (353 aa).

The region spanning 7–124 is the Response regulatory domain; it reads RILVAEDSPT…SPDFDADSRR (118 aa). Asp58 is modified (4-aspartylphosphate). Residues 158–350 form the CheB-type methylesterase domain; the sequence is PVSPTRPGVV…SRLTSAFRGS (193 aa). Catalysis depends on residues Ser172, His199, and Asp292.

Belongs to the CheB family. In terms of processing, phosphorylated by CheA. Phosphorylation of the N-terminal regulatory domain activates the methylesterase activity.

Its subcellular location is the cytoplasm. The enzyme catalyses [protein]-L-glutamate 5-O-methyl ester + H2O = L-glutamyl-[protein] + methanol + H(+). It carries out the reaction L-glutaminyl-[protein] + H2O = L-glutamyl-[protein] + NH4(+). Involved in chemotaxis. Part of a chemotaxis signal transduction system that modulates chemotaxis in response to various stimuli. Catalyzes the demethylation of specific methylglutamate residues introduced into the chemoreceptors (methyl-accepting chemotaxis proteins or MCP) by CheR. Also mediates the irreversible deamidation of specific glutamine residues to glutamic acid. This Myxococcus xanthus (strain DK1622) protein is Protein-glutamate methylesterase/protein-glutamine glutaminase 4.